Here is a 241-residue protein sequence, read N- to C-terminus: Homeobox protein TGIF2LX (241 aa).

Disordered regions lie at residues 1–56 (MEAA…PKGY) and 115–213 (RHGN…EYPD). Polar residues predominate over residues 21 to 39 (AKTQSPAQDTSTVSRNSAD). The segment at residues 48-111 (EHTKKPKGYL…INARRRILPD (64 aa)) is a DNA-binding region (homeobox; TALE-type).

It belongs to the TALE/TGIF homeobox family.

The protein resides in the nucleus. Functionally, may have a transcription role in testis. The sequence is that of Homeobox protein TGIF2LX (TGIF2LX) from Hylobates lar (Lar gibbon).